Consider the following 731-residue polypeptide: Beta-galactosidase (731 aa).

The first 23 residues, 1–23 (MGVGIQTMWSILLLFSCIFSAAS), serve as a signal peptide directing secretion. The active-site Proton donor is Glu182. The Nucleophile role is filled by Glu251. N-linked (GlcNAc...) asparagine glycosylation is present at Asn459.

The protein belongs to the glycosyl hydrolase 35 family.

It localises to the secreted. The protein resides in the extracellular space. It is found in the apoplast. It catalyses the reaction Hydrolysis of terminal non-reducing beta-D-galactose residues in beta-D-galactosides.. Its function is as follows. Involved in cell wall degradation. Degrades polysaccharides containing beta-(1--&gt;4)-linked galactans, acting as an exo-(1--&gt;4)-beta-D-galactanase. This is Beta-galactosidase from Malus domestica (Apple).